Consider the following 624-residue polypeptide: Pentatricopeptide repeat-containing protein At4g31070, mitochondrial (624 aa).

Residues Met-1 to Ala-15 constitute a mitochondrion transit peptide. PPR repeat units lie at residues Phe-56–Cys-91, Asp-92–Arg-122, Asp-123–Pro-157, Lys-158–Met-192, Ser-195–Lys-225, Asn-226–Pro-260, Asn-261–Ala-296, Asp-297–Arg-327, Asp-328–Ala-362, Asn-363–Ser-397, His-398–Lys-428, Asp-429–Val-463, Asp-464–Val-498, and Thr-499–Lys-529. Positions Ile-534–Glu-610 are type E motif.

The protein belongs to the PPR family. PCMP-E subfamily.

The protein resides in the mitochondrion. This chain is Pentatricopeptide repeat-containing protein At4g31070, mitochondrial (PCMP-E7), found in Arabidopsis thaliana (Mouse-ear cress).